The following is a 174-amino-acid chain: MLDREGYRPNVGIILINNRNEVFWGKRVREHSWQFPQGGIKPGESPETAMYRELYEEVGLLPQHVKIIGRTRDWLRYDVPNNWVRREWRGSYRGQKQIWYLLRLTGRDCDVNLRATRHPEFDGWRWHQYWAPVDEVIDFKRDVYLGALKELSSRFLRGMESYEDFAARQSSDNR.

One can recognise a Nudix hydrolase domain in the interval 6 to 149 (GYRPNVGIIL…KRDVYLGALK (144 aa)). Residues 38–59 (GGIKPGESPETAMYRELYEEVG) carry the Nudix box motif.

It belongs to the Nudix hydrolase family. RppH subfamily. It depends on a divalent metal cation as a cofactor.

Its function is as follows. Accelerates the degradation of transcripts by removing pyrophosphate from the 5'-end of triphosphorylated RNA, leading to a more labile monophosphorylated state that can stimulate subsequent ribonuclease cleavage. This is RNA pyrophosphohydrolase from Neisseria meningitidis serogroup B (strain ATCC BAA-335 / MC58).